The primary structure comprises 319 residues: Acetyl-coenzyme A carboxylase carboxyl transferase subunit alpha (319 aa).

In terms of domain architecture, CoA carboxyltransferase C-terminal spans 35–296 (DLDKEIEQLE…KATLVANLAE (262 aa)).

The protein belongs to the AccA family. As to quaternary structure, acetyl-CoA carboxylase is a heterohexamer composed of biotin carboxyl carrier protein (AccB), biotin carboxylase (AccC) and two subunits each of ACCase subunit alpha (AccA) and ACCase subunit beta (AccD).

It is found in the cytoplasm. It catalyses the reaction N(6)-carboxybiotinyl-L-lysyl-[protein] + acetyl-CoA = N(6)-biotinyl-L-lysyl-[protein] + malonyl-CoA. Its pathway is lipid metabolism; malonyl-CoA biosynthesis; malonyl-CoA from acetyl-CoA: step 1/1. Functionally, component of the acetyl coenzyme A carboxylase (ACC) complex. First, biotin carboxylase catalyzes the carboxylation of biotin on its carrier protein (BCCP) and then the CO(2) group is transferred by the carboxyltransferase to acetyl-CoA to form malonyl-CoA. The polypeptide is Acetyl-coenzyme A carboxylase carboxyl transferase subunit alpha (Photobacterium profundum (strain SS9)).